The chain runs to 246 residues: Uridylate kinase (246 aa).

Position 20-23 (20-23 (KISG)) interacts with ATP. The tract at residues 28–33 (GDQGYG) is involved in allosteric activation by GTP. UMP is bound at residue glycine 62. Glycine 63 and arginine 67 together coordinate ATP. UMP-binding positions include aspartate 82 and 143 to 150 (TGNPYFTT). Threonine 170, tyrosine 176, and aspartate 179 together coordinate ATP.

Belongs to the UMP kinase family. Homohexamer.

The protein localises to the cytoplasm. The catalysed reaction is UMP + ATP = UDP + ADP. Its pathway is pyrimidine metabolism; CTP biosynthesis via de novo pathway; UDP from UMP (UMPK route): step 1/1. Its activity is regulated as follows. Allosterically activated by GTP. Inhibited by UTP. Catalyzes the reversible phosphorylation of UMP to UDP. The sequence is that of Uridylate kinase from Cereibacter sphaeroides (strain ATCC 17029 / ATH 2.4.9) (Rhodobacter sphaeroides).